The chain runs to 167 residues: Small ribosomal subunit protein uS5 (167 aa).

The S5 DRBM domain maps to 12 to 75; that stretch reads LQEKLIAVNR…EKARRNMTTI (64 aa).

Belongs to the universal ribosomal protein uS5 family. Part of the 30S ribosomal subunit. Contacts proteins S4 and S8.

In terms of biological role, with S4 and S12 plays an important role in translational accuracy. Located at the back of the 30S subunit body where it stabilizes the conformation of the head with respect to the body. This Vibrio parahaemolyticus serotype O3:K6 (strain RIMD 2210633) protein is Small ribosomal subunit protein uS5.